The sequence spans 283 residues: Small ribosomal subunit protein uS3 (283 aa).

Residues 39 to 107 (VRAYLKTKLK…PVHVNIEEIR (69 aa)) enclose the KH type-2 domain. Residues 209 to 283 (PSGEPPVDLT…GAVPAEKAGE (75 aa)) are disordered. Over residues 217–235 (LTKEDDTKRRGPRRDDGKP) the composition is skewed to basic and acidic residues. Residues 244 to 260 (PEGQPGAAAAPGAAPAA) are compositionally biased toward low complexity.

The protein belongs to the universal ribosomal protein uS3 family. As to quaternary structure, part of the 30S ribosomal subunit. Forms a tight complex with proteins S10 and S14.

Functionally, binds the lower part of the 30S subunit head. Binds mRNA in the 70S ribosome, positioning it for translation. The polypeptide is Small ribosomal subunit protein uS3 (Herminiimonas arsenicoxydans).